A 722-amino-acid polypeptide reads, in one-letter code: Glycine--tRNA ligase beta subunit (722 aa).

The protein belongs to the class-II aminoacyl-tRNA synthetase family. Tetramer of two alpha and two beta subunits.

It localises to the cytoplasm. The enzyme catalyses tRNA(Gly) + glycine + ATP = glycyl-tRNA(Gly) + AMP + diphosphate. The polypeptide is Glycine--tRNA ligase beta subunit (glyS) (Xylella fastidiosa (strain 9a5c)).